The chain runs to 116 residues: Somatostatin (116 aa).

Positions Met1 to Gly24 are cleaved as a signal peptide. Residues Ala25–Arg88 constitute a propeptide that is removed on maturation. Residue Ala43 is modified to Alanine amide. A disordered region spans residues Gln62–Arg99. A disulfide bridge links Cys105 with Cys116.

Belongs to the somatostatin family. C-terminal amidation of the neuronostatin peptide is required for its biological activity, including for the regulation of mean arterial pressure. As to expression, expressed in the pancreas and the spleen (at protein level).

Its subcellular location is the secreted. Inhibits the secretion of pituitary hormones, including that of growth hormone/somatotropin (GH1), PRL, ACTH, luteinizing hormone (LH) and TSH. Also impairs ghrelin- and GnRH-stimulated secretion of GH1 and LH; the inhibition of ghrelin-stimulated secretion of GH1 can be further increased by neuronostatin. Its function is as follows. May enhance low-glucose-induced glucagon release by pancreatic alpha cells. This effect may be mediated by binding to GPR107 and PKA activation. May regulate cardiac contractile function. May compromise cardiomyocyte viability. In the central nervous system, may impair memory retention and may affect hippocampal excitability. May also have anxiolytic and anorexigenic effects. May play a role in arterial pressure regulation. May inhibit basal, but not ghrelin- or GnRH-stimulated secretion of GH1 or LH, but does not affect the release of other pituitary hormones, including PRL, ACTH, FSH or TSH. Potentiates inhibitory action of somatostatin on ghrelin-stimulated secretion of GH1, but not that on GnRH-stimulated secretion of LH. The chain is Somatostatin (SST) from Sus scrofa (Pig).